Consider the following 621-residue polypeptide: pH-response transcription factor pacc-1 (621 aa).

A compositionally biased stretch (polar residues) spans Met-1 to Gly-14. The interval Met-1–Pro-87 is disordered. The span at Ala-15 to Pro-87 shows a compositional bias: low complexity. 3 C2H2-type zinc fingers span residues Leu-95–His-120, Leu-131–His-155, and His-161–His-183. Disordered stretches follow at residues Pro-395 to Tyr-539 and Asp-566 to Asn-621. Low complexity-rich tracts occupy residues Ala-409–Ala-423 and Ser-436–Pro-465. The YPX[LI] motif 1 signature appears at Tyr-464 to Leu-467. A compositionally biased stretch (polar residues) spans Pro-476 to Thr-486. A compositionally biased stretch (basic and acidic residues) spans Arg-502–Pro-511. The span at Ala-515 to Ser-525 shows a compositional bias: polar residues. Over residues Arg-583 to Gln-595 the composition is skewed to low complexity. The YPX[LI] motif 2 motif lies at Tyr-614–Leu-617.

The protein belongs to the pacC/RIM101 family. In terms of assembly, binds to DNA. Interacts with palA/prr-1, which binds to the two YPX[LI] motifs and is required for proteolytic processing. In terms of processing, activated by C-terminal proteolytic cleavage by signaling protease (probably palB/RIM13) at neutral to alkaline ambient pH.

The protein resides in the cytoplasm. Its subcellular location is the nucleus. Transcription factor that mediates regulation of both acid- and alkaline-expressed genes in response to ambient pH. At alkaline ambient pH, activates transcription of alkaline-expressed genes (including pacc-1 itself) and represses transcription of acid-expressed genes. This chain is pH-response transcription factor pacc-1 (pacc-1), found in Neurospora crassa (strain ATCC 24698 / 74-OR23-1A / CBS 708.71 / DSM 1257 / FGSC 987).